A 394-amino-acid chain; its full sequence is RNA binding protein fox-1 homolog 2 (394 aa).

Disordered regions lie at residues 1–70 (MGRL…DYAG) and 83–135 (TQAH…HVSN). 2 stretches are compositionally biased toward polar residues: residues 24-36 (RDSQ…TTTP) and 83-103 (TQAH…SLTT). Over residues 105 to 125 (GGAQTDGQQSQTQSSENSESK) the composition is skewed to low complexity. An RRM domain is found at 129–205 (KRLHVSNIPF…RKIEVNNATA (77 aa)). Arg285 is subject to Omega-N-methylarginine. Residues Arg301 and Arg333 each carry the asymmetric dimethylarginine modification. Arg385 and Arg390 each carry asymmetric dimethylarginine; alternate. Arg385 and Arg390 each carry omega-N-methylarginine; alternate.

As to quaternary structure, interacts with ER-alpha N-terminal activation domain. Interacts with RBPMS; the interaction allows cooperative assembly of stable cell-specific alternative splicing regulatory complexes.

Its subcellular location is the nucleus. It localises to the cytoplasm. In terms of biological role, RNA-binding protein that regulates alternative splicing events by binding to 5'-UGCAUGU-3' elements. Prevents binding of U2AF2 to the 3'-splice site. Regulates alternative splicing of tissue-specific exons and of differentially spliced exons during erythropoiesis. Seems to act as a coregulatory factor of ER-alpha. Together with RNA binding proteins RBPMS and MBNL1/2, activates vascular smooth muscle cells alternative splicing events. This is RNA binding protein fox-1 homolog 2 (RBFOX2) from Bos taurus (Bovine).